A 1026-amino-acid chain; its full sequence is Multidrug resistance protein MdtC (1026 aa).

Over 1 to 6 (MRFFAL) the chain is Cytoplasmic. The chain crosses the membrane as a helical span at residues 7 to 29 (FIYRPVATILIAAAITLCGILGF). Over 30–335 (RLLPVAPLPQ…TIRASLQEVE (306 aa)) the chain is Periplasmic. The helical transmembrane segment at 336–353 (ETLAISVALVILVVFLFL) threads the bilayer. Over 354–359 (RSGRAT) the chain is Cytoplasmic. The helical transmembrane segment at 360-379 (LIPAVAVPVSLIGTFAAMYL) threads the bilayer. The Periplasmic portion of the chain corresponds to 380–388 (CGFSLNNLS). Residues 389 to 411 (LMALTIATGFVVDDAIVVLENIA) form a helical membrane-spanning segment. Residues 412–430 (RHLEARMKPLQAALQGTRE) lie on the Cytoplasmic side of the membrane. Residues 431–453 (VGFTVISMSLSLVAVFLPLLLMG) traverse the membrane as a helical segment. Topologically, residues 454–467 (GLPGRLLREFAVTL) are periplasmic. Residues 468–490 (SVAIGISLVVSLTLTPMMCGWML) form a helical membrane-spanning segment. Over 491–852 (KSSKPRTQPR…QVFQQTMNSQ (362 aa)) the chain is Cytoplasmic. Residues 853–875 (LILIVAAIATVYIVLGILYESYV) form a helical membrane-spanning segment. The Periplasmic portion of the chain corresponds to 876-894 (HPLTILSTLPSAGVGALLA). The helical transmembrane segment at 895–917 (LELFNAPFSLIALIGIMLLIGIV) threads the bilayer. The Cytoplasmic portion of the chain corresponds to 918-947 (KKNAIMMVDFALEAQRSGGLTPEQAIFQAC). Residues 948-970 (LLRFRPIMMTTLAALFGALPLVL) form a helical membrane-spanning segment. The Periplasmic segment spans residues 971 to 984 (SGGDGSELRQPLGI). The helical transmembrane segment at 985-1007 (TIVGGLVMSQLLTLYTTPVVYLF) threads the bilayer. Residues 1008 to 1026 (FDRLRLRFSRKNSKPVVEI) are Cytoplasmic-facing.

The protein belongs to the resistance-nodulation-cell division (RND) (TC 2.A.6) family. MdtC subfamily. As to quaternary structure, part of a tripartite efflux system composed of MdtA, MdtB and MdtC. MdtC forms a heteromultimer with MdtB.

It localises to the cell inner membrane. In Salmonella typhi, this protein is Multidrug resistance protein MdtC.